The following is a 108-amino-acid chain: Insulin (108 aa).

The signal sequence occupies residues 1–24; the sequence is MALWMHLLPLLALLALWGPEPAPA. 3 cysteine pairs are disulfide-bonded: cysteine 31–cysteine 94, cysteine 43–cysteine 107, and cysteine 93–cysteine 98. A propeptide spans 57–85 (c peptide); the sequence is EAEDLQVGQVELGGGSITGSLPPLEGPMQ.

The protein belongs to the insulin family. In terms of assembly, heterodimer of a B chain and an A chain linked by two disulfide bonds.

It localises to the secreted. Insulin decreases blood glucose concentration. It increases cell permeability to monosaccharides, amino acids and fatty acids. It accelerates glycolysis, the pentose phosphate cycle, and glycogen synthesis in liver. The polypeptide is Insulin (INS) (Aotus trivirgatus (Three-striped night monkey)).